A 236-amino-acid polypeptide reads, in one-letter code: Small ribosomal subunit protein uS3 (236 aa).

One can recognise a KH type-2 domain in the interval 38 to 106 (LRRYLHTRLK…DIQINISEIK (69 aa)). Positions 211–236 (DLSPNVQAQQRKMKESPQQRRQRRGG) are disordered.

The protein belongs to the universal ribosomal protein uS3 family. Part of the 30S ribosomal subunit. Forms a tight complex with proteins S10 and S14.

Its function is as follows. Binds the lower part of the 30S subunit head. Binds mRNA in the 70S ribosome, positioning it for translation. In Salinibacter ruber (strain DSM 13855 / M31), this protein is Small ribosomal subunit protein uS3.